The primary structure comprises 235 residues: Large ribosomal subunit protein uL1 (235 aa).

It belongs to the universal ribosomal protein uL1 family. As to quaternary structure, part of the 50S ribosomal subunit.

Its function is as follows. Binds directly to 23S rRNA. The L1 stalk is quite mobile in the ribosome, and is involved in E site tRNA release. In terms of biological role, protein L1 is also a translational repressor protein, it controls the translation of the L11 operon by binding to its mRNA. In Mycolicibacterium paratuberculosis (strain ATCC BAA-968 / K-10) (Mycobacterium paratuberculosis), this protein is Large ribosomal subunit protein uL1.